Here is a 294-residue protein sequence, read N- to C-terminus: MTKKVFDDISRLALKALLYEVSLSPKPGLVDQLDNGAHDDMSFLTFVDSALALAPFFNTYLDIGFYHAKEDPGLIFERLRVSGIEAEQAMFSATKGVNTHKGVNFSLALLLGATGMYLASQPQLLAHVTAFTEEDSLAICQLVKPLTAHLLETDFGSLDLKKELTYGEKLFLDYGIKGPRGEASEGYPTIAHKALPFLRKSLRSTDQETAQLQLLVYLMSIVEDGNLIHRGGIKAWRQVKQDMLLLHNSSLSTADLKAALSAYNDKLIQKHLSPGGTADLLVLSLYFAFLENQL.

It belongs to the CitG/MdcB family.

It carries out the reaction 3'-dephospho-CoA + ATP = 2'-(5''-triphospho-alpha-D-ribosyl)-3'-dephospho-CoA + adenine. This Streptococcus equi subsp. zooepidemicus (strain H70) protein is Probable 2-(5''-triphosphoribosyl)-3'-dephosphocoenzyme-A synthase.